The chain runs to 339 residues: Ornithine carbamoyltransferase, catabolic (339 aa).

Carbamoyl phosphate contacts are provided by residues 57-60 (STRT), Q84, R108, and 135-138 (HPTQ). L-ornithine-binding positions include N167, D231, and 235 to 236 (SM). Residues 274–275 (CL) and R319 each bind carbamoyl phosphate.

Belongs to the aspartate/ornithine carbamoyltransferase superfamily. OTCase family.

The protein localises to the cytoplasm. The catalysed reaction is carbamoyl phosphate + L-ornithine = L-citrulline + phosphate + H(+). Its pathway is amino-acid degradation; L-arginine degradation via ADI pathway; carbamoyl phosphate from L-arginine: step 2/2. Its function is as follows. Reversibly catalyzes the transfer of the carbamoyl group from carbamoyl phosphate (CP) to the N(epsilon) atom of ornithine (ORN) to produce L-citrulline. In Enterococcus faecalis (strain ATCC 700802 / V583), this protein is Ornithine carbamoyltransferase, catabolic (arcB).